Consider the following 1153-residue polypeptide: PPi-type phosphoenolpyruvate carboxykinase 3 (1153 aa).

The stretch at 1085-1131 (RQKLEVAKLNKDLAYLNKTIAEKPRLAETLNKQIAAVKEELQYVSSE) forms a coiled coil.

This sequence belongs to the PPi-type phosphoenolpyruvate carboxykinase family. In terms of assembly, monomer and trimer; forms heterotrimers with PEPCK1 and PEPCK2.

The protein localises to the cytoplasm. It localises to the cytosol. The catalysed reaction is oxaloacetate + diphosphate = phosphoenolpyruvate + phosphate + CO2. Inorganic pyrophosphate (PPi)-dependent phosphoenolpyruvate carboxykinase, which regulates the carbon flow of the central metabolism by fixing CO(2) to phosphoenolpyruvate to produce oxaloacetate. Can also produce pyruvate and diphosphate from phosphoenolpyruvate and phosphate. This chain is PPi-type phosphoenolpyruvate carboxykinase 3, found in Entamoeba histolytica (strain ATCC 30459 / HM-1:IMSS / ABRM).